A 364-amino-acid polypeptide reads, in one-letter code: MNADIDDVLALVRPDLQAFAGYSSARSAAVQGEVWLNANESAWANPADAAGNSRRYPEPQPLALREGLAALYGVTPPQLLIGRGSDEAIDLLVRALCVPGRDGVLVTPPVFGMYAVCARLQGAALIEVPLVDTEDGLRADLDAVIDTAKSRNAKLVFLCAPSNPAGSDIALDEIERVATALRGQALVVVDEAYVEYAQRPSAATLLAAHANLAVLRTLSKAHALAAARIGSLIAAPELIAVLRRCQAPYPVPTPCAELAVQALQPAGLARTAERVATVIAERERLFAALPGLPGVRRVYRSAGNYLLVRFADAQAAFDTLLAAGVVVRDQRAAPQLGDALRISIGSPEENDRVLAALSARRAAA.

Residue Lys-220 is modified to N6-(pyridoxal phosphate)lysine.

Belongs to the class-II pyridoxal-phosphate-dependent aminotransferase family. Histidinol-phosphate aminotransferase subfamily. In terms of assembly, homodimer. Pyridoxal 5'-phosphate is required as a cofactor.

It catalyses the reaction L-histidinol phosphate + 2-oxoglutarate = 3-(imidazol-4-yl)-2-oxopropyl phosphate + L-glutamate. The protein operates within amino-acid biosynthesis; L-histidine biosynthesis; L-histidine from 5-phospho-alpha-D-ribose 1-diphosphate: step 7/9. The chain is Histidinol-phosphate aminotransferase from Stenotrophomonas maltophilia (strain R551-3).